A 154-amino-acid polypeptide reads, in one-letter code: Small ribosomal subunit protein uS7 (154 aa).

The protein belongs to the universal ribosomal protein uS7 family. As to quaternary structure, part of the 30S ribosomal subunit. Contacts proteins S9 and S11.

Functionally, one of the primary rRNA binding proteins, it binds directly to 16S rRNA where it nucleates assembly of the head domain of the 30S subunit. Is located at the subunit interface close to the decoding center, probably blocks exit of the E-site tRNA. The polypeptide is Small ribosomal subunit protein uS7 (Karelsulcia muelleri (strain GWSS) (Sulcia muelleri)).